The primary structure comprises 268 residues: Tryptophan synthase alpha chain (268 aa).

Catalysis depends on proton acceptor residues Glu-49 and Asp-60.

The protein belongs to the TrpA family. As to quaternary structure, tetramer of two alpha and two beta chains.

The enzyme catalyses (1S,2R)-1-C-(indol-3-yl)glycerol 3-phosphate + L-serine = D-glyceraldehyde 3-phosphate + L-tryptophan + H2O. The protein operates within amino-acid biosynthesis; L-tryptophan biosynthesis; L-tryptophan from chorismate: step 5/5. In terms of biological role, the alpha subunit is responsible for the aldol cleavage of indoleglycerol phosphate to indole and glyceraldehyde 3-phosphate. This is Tryptophan synthase alpha chain from Xanthomonas axonopodis pv. citri (strain 306).